The sequence spans 501 residues: Neuronal acetylcholine receptor subunit beta-2 (501 aa).

The signal sequence occupies residues 1-25 (MARCSNSMALLFSFGLLWLCSGVLG). The Extracellular portion of the chain corresponds to 26 to 238 (TDTEERLVEH…IIRRKPLFYT (213 aa)). N-linked (GlcNAc...) asparagine glycosylation is found at Asn-51 and Asn-168. Cysteines 155 and 169 form a disulfide. The helical transmembrane segment at 239 to 259 (INLIIPCVLITSLAILVFYLP) threads the bilayer. Topologically, residues 260 to 267 (SDCGEKMT) are cytoplasmic. A helical membrane pass occupies residues 268–288 (LCISVLLALTVFLLLISKIVP). At 289 to 300 (PTSLDVPLVGKY) the chain is on the extracellular side. Residues 301 to 321 (LMFTMVLVTFSIVTSVCVLNV) form a helical membrane-spanning segment. The Cytoplasmic portion of the chain corresponds to 322 to 459 (HHRSPTTHTM…WKYVAMVIDR (138 aa)). Residues 460–480 (LFLWIFVFVCVFGTIGMFLQP) traverse the membrane as a helical segment.

This sequence belongs to the ligand-gated ion channel (TC 1.A.9) family. Acetylcholine receptor (TC 1.A.9.1) subfamily. Beta-2/CHRNB2 sub-subfamily. Neuronal AChR is a heteropentamer composed of two different types of subunits: alpha and beta. CHRNB2/Beta-2 subunit can be combined to CHRNA2/alpha-2, CHRNA3/alpha-3 or CHRNA4/alpha-4, CHRNA5/alpha-5, CHRNA6/alpha-6 and CHRNB3/beta-3 to give rise to functional receptors. CHRNA2:CHRNB2 and CHRNA4:CHRNB2 nAChR complexes exist in two subtypes: LS (low agonist sensitivity) with a (CHRNA2/4)3:(CHRNB2)2 and HS (high agonist sensitivity) with a (CHRNA2/4)2:(CHRNB2)3 stoichiometry; the subtypes differ in their subunit binding interfaces which are involved in ligand binding. Cells produce predominantly an (CHRNA4)3:(CHRNB2)2 nAChR. The stoichiometric form (CHRNA4)2:(CHRNB2)3 expression is selectively up-regulated by nicotine and has lower single channel conductance and calcium permeability. Also part of the stoichiometric forms: (CHRNA4:CHRNB2)2:CHRNB3 or (CHRNA6:CHRNB2)2:CHRNB3. Can form heteropentamers with CHRNA7, mainly found in basal forebrain cholinergic neurons. Interacts with RIC3; which is required for proper folding and assembly. Interacts with LYPD6.

The protein resides in the synaptic cell membrane. It is found in the cell membrane. The enzyme catalyses K(+)(in) = K(+)(out). The catalysed reaction is Na(+)(in) = Na(+)(out). It catalyses the reaction Ca(2+)(in) = Ca(2+)(out). Its activity is regulated as follows. Activated by a myriad of ligands such as acetylcholine, cytisine, nicotine, choline and epibatidine. Channel potentiation by calcium is stoichiometry-selective, CHRNA4:CHRNB2 nACh receptor is achieved by calcium association with topographically distinct sites framed by anionic residues within the CHRNA4 subunit and between the CHRNA4 and CHRNB2 subunits. Oligomeric amyloid-beta protein 42 activates specifially CHRNA7:CHRNB2 nAchRs. nAChR activity is inhibited by the antagonist alpha-conotoxins BuIA, PnIA, PnIC, GID and MII, small disulfide-constrained peptides from cone snails. Its function is as follows. Component of neuronal acetylcholine receptors (nAChRs) that function as pentameric, ligand-gated cation channels with high calcium permeability among other activities. nAChRs are excitatory neurotrasnmitter receptors formed by a collection of nAChR subunits known to mediate synaptic transmission in the nervous system and the neuromuscular junction. Each nAchR subunit confers differential attributes to channel properties, including activation, deactivation and desensitization kinetics, pH sensitivity, cation permeability, and binding to allosteric modulators. CHRNB2 forms heteropentameric neuronal acetylcholine receptors with CHRNA2, CHRNA3, CHRNA4 and CHRNA6, as well as CHRNA5 and CHRNB3 as accesory subunits. Found in two major stoichiometric forms,(CHRNA4)3:(CHRNB2)2 and (CHRNA4)2:(CHRNB2)3, the two stoichiometric forms differ in their unitary conductance, calcium permeability, ACh sensitivity and potentiation by divalent cation. Heteropentameric channels with CHRNA6 and CHRNA4 exhibit high sensitivity to ACh and nicotine and are predominantly expressed in only a few brain areas, including dopaminergic neurons, norepirephrine neurons and cells of the visual system. nAChrs containing CHRNA6 subunits mediate endogenous cholinergic modulation of dopamine and gamma-aminobutyric acid (GABA) release in response to nicotine at nerve terminals. Also forms functional nAChRs with other subunits such as CHRNA7:CHRNB2, mainly expressed in basal forebrain cholinergic neurons. The chain is Neuronal acetylcholine receptor subunit beta-2 (Chrnb2) from Mus musculus (Mouse).